A 359-amino-acid chain; its full sequence is Mineralocorticoid receptor (359 aa).

The nuclear receptor DNA-binding region spans F1–S49. Residues C13, C19, C29, and C32 each coordinate Zn(2+). The NR C4-type zinc-finger motif lies at C13–C37. The disordered stretch occupies residues K48–V96. Residues K50–P107 form a hinge region. In terms of domain architecture, NR LBD spans Y108–I339. 2 residues coordinate 21-hydroxyprogesterone: N145 and Q151. Residues N145 and Q151 each coordinate aldosterone. Positions 145 and 151 each coordinate progesterone. The segment at K157 to K160 is important for coactivator binding. 21-hydroxyprogesterone is bound by residues R192 and T320. R192 and T320 together coordinate aldosterone. Positions 192 and 320 each coordinate progesterone.

It belongs to the nuclear hormone receptor family. NR3 subfamily.

The protein resides in the cytoplasm. The protein localises to the nucleus. Its function is as follows. Receptor for both mineralocorticoids (MC) such as cortisol. Binds to mineralocorticoid response elements (MRE) and transactivates target genes. The effect of MC is to increase ion and water transport and thus raise extracellular fluid volume and blood pressure and lower potassium levels. This chain is Mineralocorticoid receptor (nr3c2), found in Oncorhynchus mykiss (Rainbow trout).